Reading from the N-terminus, the 707-residue chain is MASVQKDPILQVETTCGSLLFELQIIWDEVGETETDRDQMLLELERECLEVYRRKVDQANRCRAQLRQAIADAEAQLAAICSAMGERPVHIRQSDQSVGSLKQELGRILPELEEMQKRKVERRNQFIVVMEQIDSITNDIKGQGELVHSEPLIDETNLSMRKLEELHCQLQVLQKEKIDRVETIRKHLCTLYSHCSVLGMDFNEVVGQVNPTLSDPEGPRSLSDHTIEKLGAAVQKLMEVKIQRMQRLQDLATTMLELWNLMDTPIEEQQEYQHITCNIAASEHEITEANSLSEDFIKYVEAEVVRLDEVKASKMKELVLKKRSELEEICRKTHLLPVSDSAIDQTIVAIESGIVDATMVLEHLEQHISKIKEEALSRKEILERVEKWLSACDEESWLEEYNRDDNRYNAGRGAHLTLKRAEKARNLVTKLPGMVEALASKTIVWEQENGIEFLYDGIRLLSMLEEYNILRQEREEEHRRQRDQKKLQGQLIAEQEALYGSKPSPSKPLGGKKAPRMSTGGASNRRLSLGAAMHQTPKPNKKADHRHNDGALSNGRRGLDIAGLPSRKQSMNPSEMLQSPLVRKPFSPISTTVVASKANIATTTTQQLPKNNAVNEISSFATPIKNNNILRNLEEEKMMTMMMQTPKNVAAMIPIPSTPATVSVPMHTAPTPFTNNARLMSEKPEVVEYSFEERRLAFMLQSECRLV.

Coiled-coil stretches lie at residues Leu-49 to Met-84, Asn-157 to Asp-179, Gln-269 to Ala-289, Ile-354 to Glu-374, and Leu-464 to Lys-486. The tract at residues Gln-495–Ser-574 is disordered. Positions Gly-500 to Lys-512 are enriched in low complexity. 2 positions are modified to phosphoserine: Ser-504 and Ser-528.

It belongs to the MAP65/ASE1 family. As to quaternary structure, forms a dimer. Binds to microtubules (MT) during cell division. Bundles polymerized MT via the formation of 25-nm crossbridges with centrally located endocytic MT, and midline phragmoplast MT. Expressed in all tissues enriched in dividing cells, such as the root and shoot apical meristem, foliar primordia, and young leaves, and embryos.

It localises to the nucleus. The protein localises to the cytoplasm. Its subcellular location is the cytoskeleton. The protein resides in the phragmoplast. Functionally, microtubule-associated protein that plays a critical role in organizing the mitotic microtubule array during both early and late mitosis in all plant organs. Essential for the cytokinesis, especially in roots, by maintaining the integrity of the overlapped microtubules in the phragmoplast. Required during root morphogenesis. Needed for giant cell development during root knot nematode infection, where cytokinesis is initiated but not completed. The polypeptide is 65-kDa microtubule-associated protein 3 (MAP65-3) (Arabidopsis thaliana (Mouse-ear cress)).